A 496-amino-acid chain; its full sequence is Lysine--tRNA ligase (496 aa).

Residues glutamate 409 and glutamate 416 each contribute to the Mg(2+) site.

This sequence belongs to the class-II aminoacyl-tRNA synthetase family. Homodimer. Mg(2+) serves as cofactor.

Its subcellular location is the cytoplasm. It carries out the reaction tRNA(Lys) + L-lysine + ATP = L-lysyl-tRNA(Lys) + AMP + diphosphate. The sequence is that of Lysine--tRNA ligase from Streptococcus pneumoniae (strain Hungary19A-6).